We begin with the raw amino-acid sequence, 338 residues long: Methionine synthase (338 aa).

Histidine 211, cysteine 213, and cysteine 294 together coordinate Zn(2+).

It belongs to the archaeal MetE family. Requires Zn(2+) as cofactor.

Its pathway is amino-acid biosynthesis; L-methionine biosynthesis via de novo pathway. Functionally, catalyzes the transfer of a methyl group to L-homocysteine resulting in methionine formation. The physiological methyl donor is unknown. This is Methionine synthase from Sulfurisphaera tokodaii (strain DSM 16993 / JCM 10545 / NBRC 100140 / 7) (Sulfolobus tokodaii).